Here is a 431-residue protein sequence, read N- to C-terminus: Histidinol dehydrogenase 1 (431 aa).

Tyr-127, Gln-188, and Asn-211 together coordinate NAD(+). Substrate contacts are provided by Ser-234, Gln-256, and His-259. Residues Gln-256 and His-259 each contribute to the Zn(2+) site. Catalysis depends on proton acceptor residues Glu-324 and His-325. Substrate is bound by residues His-325, Asp-358, Glu-412, and His-417. Residue Asp-358 participates in Zn(2+) binding. Residue His-417 participates in Zn(2+) binding.

It belongs to the histidinol dehydrogenase family. Zn(2+) serves as cofactor.

It carries out the reaction L-histidinol + 2 NAD(+) + H2O = L-histidine + 2 NADH + 3 H(+). Its pathway is amino-acid biosynthesis; L-histidine biosynthesis; L-histidine from 5-phospho-alpha-D-ribose 1-diphosphate: step 9/9. Its function is as follows. Catalyzes the sequential NAD-dependent oxidations of L-histidinol to L-histidinaldehyde and then to L-histidine. This chain is Histidinol dehydrogenase 1 (hisD1), found in Nostoc sp. (strain PCC 7120 / SAG 25.82 / UTEX 2576).